The sequence spans 158 residues: Sorbin and SH3 domain-containing protein 2 (158 aa).

Residues 1–46 form the SoHo domain; sequence MRAATPLQTVDRPKDWYKTMFKQIHMVHKPDDDTDMYNTPYTYNAG. The segment at 28-158 is disordered; that stretch reads HKPDDDTDMY…TKPQAGRRKV (131 aa). A compositionally biased stretch (polar residues) spans 50–66; the sequence is SPYSAQSHPAAKTQTYR. The segment covering 71–81 has biased composition (basic and acidic residues); that stretch reads SHSDNGTDAFK. The residue at position 73 (Ser-73) is a Phosphoserine. Residues 86–99 show a composition bias toward pro residues; sequence PVPPPHVPPPVPPL. Residues 100–136 show a composition bias toward basic and acidic residues; that stretch reads RPRDRSSTEKHDWDPPDRKVDTRKFRSEPRSIFEYEP. At Ala-153 the chain carries Alanine amide.

In terms of assembly, interacts with ABL1/c-Abl, ABL2/v-Abl/Arg, ACTN, AKT1, CBL, PALLD and PAK1. Interacts with ABL, CBL, DNM1, DNM2, FLOT1, AFDN, PTK2B/PYK2, SAPAP, SPTAN1, SYNJ1, SYNJ2, VCL/vinculin, and WASF. Interacts with PTPN12 and WASF1 via its SH3 domains; this interaction may mediate the partial PTPN12 and WASF1 translocation to focal adhesion sites. Ubiquitinated by CBL. Post-translationally, dephosphorylated by PTPN12. As to expression, expressed in duodenum.

The protein localises to the cytoplasm. Its subcellular location is the perinuclear region. The protein resides in the apical cell membrane. It localises to the cell junction. It is found in the focal adhesion. The protein localises to the cell projection. Its subcellular location is the lamellipodium. Its function is as follows. Adapter protein that plays a role in the assembling of signaling complexes, being a link between ABL kinases and actin cytoskeleton. Can form complex with ABL1 and CBL, thus promoting ubiquitination and degradation of ABL1 or with AKT1 and PAK1, thus mediating AKT1-mediated activation of PAK1. May play a role in the regulation of pancreatic cell adhesion, possibly by acting on WASF1 phosphorylation, enhancing phosphorylation by ABL1, as well as dephosphorylation by PTPN12. Increases water and sodium absorption in the intestine and gall-bladder. This Sus scrofa (Pig) protein is Sorbin and SH3 domain-containing protein 2 (SORBS2).